The following is a 140-amino-acid chain: Coiled-coil domain-containing protein 126 (140 aa).

The N-terminal stretch at 1 to 26 (MFFTISRKNMSQKLSLLLLVFGLIWG) is a signal peptide. 2 N-linked (GlcNAc...) asparagine glycosylation sites follow: Asn-110 and Asn-134. Residues 120 to 140 (TSGNLVPVTTNKRTNVSGSIR) form a disordered region.

The protein resides in the secreted. The protein is Coiled-coil domain-containing protein 126 (CCDC126) of Homo sapiens (Human).